The sequence spans 281 residues: MAISKKSSLYLPIFTFITMLLMVVNKVSSSTADANALHFTFNQFSKDQKDLILQGDATTGTDGNLELTRVSSNGSPQGNSVGRALFYAPVHIWESSAVVASFDATFKFLIKSPDSEPADGITFFIANIDSSIPSGSGGRLLGLFPDANIIKNSTTIDFNAAYNADTIVAVELDTYPNTDIGDPNYPHIGIDIKSIRSKKTTRWNIQNGKVGTAHINYNSVGKRLSAIVSYPNSDSATVSYDVDLDNVLPEWVRVGLSATTGLYKETNTILSWSFTSKLKSN.

Positions 1 to 29 (MAISKKSSLYLPIFTFITMLLMVVNKVSS) are cleaved as a signal peptide. Residue D119 participates in Ca(2+) binding. Residue R139 participates in a carbohydrate binding. A propeptide spans 149–163 (IIKNSTTIDFNAAYN) (removed in mature form). Mn(2+) is bound by residues E171 and D173. Ca(2+) is bound by residues D173, Y175, N177, and D182. Y175 serves as a coordination point for a carbohydrate. Mn(2+) is bound by residues D182 and H187. An a carbohydrate-binding site is contributed by 262–263 (LY).

It belongs to the leguminous lectin family. Equilibrium between homodimer and homotetramer. The mature chain consists of residues 164-281 followed by residues 30-148. Concanavalin A-like lectins of the Diocleinae subtribe undergo proteolytic processing referred to as circular permutation. The propeptide is split into an N-terminal and a C-terminal part, the gamma and beta chain, respectively. These are then religated in beta-gamma order to form the mature alpha chain. The beta and gamma chains can often be detected in cell extracts.

Functionally, D-mannose-specific lectin. The sequence is that of Lectin CaBo from Canavalia bonariensis.